The sequence spans 252 residues: Coenzyme F420:L-glutamate ligase (252 aa).

GTP contacts are provided by residues 12–15 (VPLE), 44–45 (HT), and lysine 49. Aspartate 114 is a binding site for a divalent metal cation. Asparagine 117 serves as a coordination point for GTP. Residues aspartate 155, threonine 156, and glutamine 213 each coordinate a divalent metal cation. A GTP-binding site is contributed by 211–218 (MGQADEGT).

It belongs to the CofE family. Homodimer. Mg(2+) serves as cofactor. It depends on Mn(2+) as a cofactor. Requires K(+) as cofactor.

The enzyme catalyses oxidized coenzyme F420-0 + GTP + L-glutamate = oxidized coenzyme F420-1 + GDP + phosphate + H(+). The catalysed reaction is oxidized coenzyme F420-1 + GTP + L-glutamate = oxidized coenzyme F420-2 + GDP + phosphate + H(+). Its pathway is cofactor biosynthesis; coenzyme F420 biosynthesis. Its function is as follows. Catalyzes the GTP-dependent successive addition of two or more gamma-linked L-glutamates to the L-lactyl phosphodiester of 7,8-didemethyl-8-hydroxy-5-deazariboflavin (F420-0) to form coenzyme F420-0-glutamyl-glutamate (F420-2) or polyglutamated F420 derivatives. This Methanopyrus kandleri (strain AV19 / DSM 6324 / JCM 9639 / NBRC 100938) protein is Coenzyme F420:L-glutamate ligase.